Reading from the N-terminus, the 396-residue chain is Elongation factor Tu 2 (396 aa).

Residues 10 to 206 (KPHCNIGTIG…TVDAYIPQPD (197 aa)) form the tr-type G domain. Positions 19 to 26 (GHVDHGKT) are G1. Residue 19–26 (GHVDHGKT) participates in GTP binding. Mg(2+) is bound at residue Thr26. Positions 60–64 (GITIN) are G2. Residues 81–84 (DCPG) are G3. Residues 81-85 (DCPGH) and 136-139 (NKVD) each bind GTP. Residues 136–139 (NKVD) form a G4 region. The segment at 174–176 (SAK) is G5.

The protein belongs to the TRAFAC class translation factor GTPase superfamily. Classic translation factor GTPase family. EF-Tu/EF-1A subfamily. In terms of assembly, monomer.

Its subcellular location is the cytoplasm. It carries out the reaction GTP + H2O = GDP + phosphate + H(+). Its function is as follows. GTP hydrolase that promotes the GTP-dependent binding of aminoacyl-tRNA to the A-site of ribosomes during protein biosynthesis. The sequence is that of Elongation factor Tu 2 from Caulobacter sp. (strain K31).